Here is a 321-residue protein sequence, read N- to C-terminus: Polygalacturonan/rhamnogalacturonan transport system permease protein YteP (321 aa).

The region spanning 1–144 (MKTAEAQAPA…YIPHFMSWVI (144 aa)) is the ABC transmembrane type-1 domain. The next 3 helical transmembrane spans lie at 21-41 (RKRLLIKLIQQKYLYLMILPG), 63-83 (YQPFLGILGSEWVGLKHFIRL), and 123-143 (IALFKKFVQTLIYIPHFMSWV).

Belongs to the binding-protein-dependent transport system permease family. As to quaternary structure, the complex is probably composed of two ATP-binding proteins (MsmX), two transmembrane proteins (YtcP and YteP) and a solute-binding protein (YtcQ).

Its subcellular location is the cell membrane. Its function is as follows. Involved in pectin degradation. Part of the ABC transporter complex YtcQP-YteP involved in the uptake of polygalacturonan and rhamnogalacturonan type I. Responsible for the translocation of the substrate across the membrane. The protein is Polygalacturonan/rhamnogalacturonan transport system permease protein YteP (yteP) of Bacillus subtilis (strain 168).